The primary structure comprises 214 residues: Outer-membrane lipoprotein LolB (214 aa).

The first 25 residues, Met1–Gly25, serve as a signal peptide directing secretion. Cys26 is lipidated: N-palmitoyl cysteine. The S-diacylglycerol cysteine moiety is linked to residue Cys26.

Belongs to the LolB family. As to quaternary structure, monomer.

The protein localises to the cell outer membrane. In terms of biological role, plays a critical role in the incorporation of lipoproteins in the outer membrane after they are released by the LolA protein. This is Outer-membrane lipoprotein LolB from Shewanella oneidensis (strain ATCC 700550 / JCM 31522 / CIP 106686 / LMG 19005 / NCIMB 14063 / MR-1).